We begin with the raw amino-acid sequence, 347 residues long: Isopentenyl-diphosphate delta-isomerase (347 aa).

Residue 5–6 coordinates substrate; the sequence is RK. Residues serine 61, 62-64, serine 92, and asparagine 120 contribute to the FMN site; that span reads SMT. 92–94 is a binding site for substrate; the sequence is SMR. Glutamine 159 contacts substrate. Glutamate 160 lines the Mg(2+) pocket. FMN is bound by residues lysine 189, serine 214, threonine 219, 269–271, and 290–291; these read GLR and AR.

Belongs to the IPP isomerase type 2 family. In terms of assembly, homooctamer. Dimer of tetramers. FMN serves as cofactor. The cofactor is NADPH. Requires Mg(2+) as cofactor.

It localises to the cytoplasm. It catalyses the reaction isopentenyl diphosphate = dimethylallyl diphosphate. Its function is as follows. Involved in the biosynthesis of isoprenoids. Catalyzes the 1,3-allylic rearrangement of the homoallylic substrate isopentenyl (IPP) to its allylic isomer, dimethylallyl diphosphate (DMAPP). The chain is Isopentenyl-diphosphate delta-isomerase from Thermoplasma volcanium (strain ATCC 51530 / DSM 4299 / JCM 9571 / NBRC 15438 / GSS1).